A 73-amino-acid polypeptide reads, in one-letter code: Translation initiation factor IF-1 (73 aa).

In terms of domain architecture, S1-like spans 1–72 (MAKEEAIEKD…SKGRIVYRYK (72 aa)).

The protein belongs to the IF-1 family. In terms of assembly, component of the 30S ribosomal translation pre-initiation complex which assembles on the 30S ribosome in the order IF-2 and IF-3, IF-1 and N-formylmethionyl-tRNA(fMet); mRNA recruitment can occur at any time during PIC assembly.

It is found in the cytoplasm. One of the essential components for the initiation of protein synthesis. Stabilizes the binding of IF-2 and IF-3 on the 30S subunit to which N-formylmethionyl-tRNA(fMet) subsequently binds. Helps modulate mRNA selection, yielding the 30S pre-initiation complex (PIC). Upon addition of the 50S ribosomal subunit IF-1, IF-2 and IF-3 are released leaving the mature 70S translation initiation complex. In Salinibacter ruber (strain DSM 13855 / M31), this protein is Translation initiation factor IF-1.